Consider the following 321-residue polypeptide: Torsin-2A (321 aa).

The first 27 residues, 1–27 (MAVARHGCPPWGSILGLLVLALAAAAA), serve as a signal peptide directing secretion. Position 93-100 (93-100 (GWTGTGKS)) interacts with ATP. A glycan (N-linked (GlcNAc...) asparagine) is linked at N149.

The protein belongs to the ClpA/ClpB family. Torsin subfamily. Homohexamer. Interacts with TOR1AIP1.

The protein resides in the endoplasmic reticulum lumen. The sequence is that of Torsin-2A (Tor2a) from Rattus norvegicus (Rat).